A 246-amino-acid chain; its full sequence is Ribonuclease 3 (246 aa).

In terms of domain architecture, RNase III spans 18–147; sequence FKELQKKIGI…FIGALYLDQG (130 aa). E60 contributes to the Mg(2+) binding site. Residue D64 is part of the active site. 2 residues coordinate Mg(2+): D133 and E136. E136 is an active-site residue. The DRBM domain maps to 173–242; sequence DFKSQLQELV…AQMALQKLKT (70 aa).

Belongs to the ribonuclease III family. As to quaternary structure, homodimer. Mg(2+) serves as cofactor.

The protein resides in the cytoplasm. The enzyme catalyses Endonucleolytic cleavage to 5'-phosphomonoester.. Its function is as follows. Digests double-stranded RNA. Involved in the processing of primary rRNA transcript to yield the immediate precursors to the large and small rRNAs (23S and 16S). Processes some mRNAs, and tRNAs when they are encoded in the rRNA operon. Processes pre-crRNA and tracrRNA of type II CRISPR loci if present in the organism. In Geobacillus sp. (strain WCH70), this protein is Ribonuclease 3.